The following is a 274-amino-acid chain: Large ribosomal subunit protein uL2cz (274 aa).

Disordered regions lie at residues 1–25 (MAIH…VKSN) and 224–274 (NPVD…RRSK). A compositionally biased stretch (polar residues) spans 7–25 (KTSTPSTRNGTVDSQVKSN).

It belongs to the universal ribosomal protein uL2 family. As to quaternary structure, part of the 50S ribosomal subunit.

The protein localises to the plastid. It is found in the chloroplast. The chain is Large ribosomal subunit protein uL2cz (rpl2-A) from Atropa belladonna (Belladonna).